A 442-amino-acid polypeptide reads, in one-letter code: Thymidine phosphorylase (442 aa).

Belongs to the thymidine/pyrimidine-nucleoside phosphorylase family. Homodimer.

It catalyses the reaction thymidine + phosphate = 2-deoxy-alpha-D-ribose 1-phosphate + thymine. It participates in pyrimidine metabolism; dTMP biosynthesis via salvage pathway; dTMP from thymine: step 1/2. The enzymes which catalyze the reversible phosphorolysis of pyrimidine nucleosides are involved in the degradation of these compounds and in their utilization as carbon and energy sources, or in the rescue of pyrimidine bases for nucleotide synthesis. The chain is Thymidine phosphorylase from Pectobacterium atrosepticum (strain SCRI 1043 / ATCC BAA-672) (Erwinia carotovora subsp. atroseptica).